The following is a 345-amino-acid chain: Protein RecA (345 aa).

66–73 (GPESSGKT) is a binding site for ATP.

It belongs to the RecA family.

The protein resides in the cytoplasm. Can catalyze the hydrolysis of ATP in the presence of single-stranded DNA, the ATP-dependent uptake of single-stranded DNA by duplex DNA, and the ATP-dependent hybridization of homologous single-stranded DNAs. It interacts with LexA causing its activation and leading to its autocatalytic cleavage. The sequence is that of Protein RecA from Helicobacter hepaticus (strain ATCC 51449 / 3B1).